Consider the following 778-residue polypeptide: 5-methyltetrahydropteroyltriglutamate--homocysteine methyltransferase (778 aa).

5-methyltetrahydropteroyltri-L-glutamate-binding positions include 17–20 (RELK) and K118. L-homocysteine is bound by residues 436–438 (IGS) and E489. Residues 436–438 (IGS) and E489 each bind L-methionine. 5-methyltetrahydropteroyltri-L-glutamate-binding positions include 520–521 (RC) and W566. D604 is an L-homocysteine binding site. Position 604 (D604) interacts with L-methionine. Residue E610 participates in 5-methyltetrahydropteroyltri-L-glutamate binding. Residues H646, C648, and E670 each contribute to the Zn(2+) site. Catalysis depends on H699, which acts as the Proton donor. C731 is a binding site for Zn(2+).

This sequence belongs to the vitamin-B12 independent methionine synthase family. Requires Zn(2+) as cofactor.

The catalysed reaction is 5-methyltetrahydropteroyltri-L-glutamate + L-homocysteine = tetrahydropteroyltri-L-glutamate + L-methionine. The protein operates within amino-acid biosynthesis; L-methionine biosynthesis via de novo pathway; L-methionine from L-homocysteine (MetE route): step 1/1. Its function is as follows. Catalyzes the transfer of a methyl group from 5-methyltetrahydrofolate to homocysteine resulting in methionine formation. The sequence is that of 5-methyltetrahydropteroyltriglutamate--homocysteine methyltransferase from Vibrio vulnificus (strain CMCP6).